Here is a 398-residue protein sequence, read N- to C-terminus: Signal-regulatory protein beta-1 isoform 3 (398 aa).

The first 29 residues, 1–29 (MPVPASWPHLPSPFLLMTLLLGRLTGVAG), serve as a signal peptide directing secretion. Residues 30 to 371 (EEELQVIQPD…GPALASAAPL (342 aa)) lie on the Extracellular side of the membrane. The Ig-like V-type domain occupies 31–136 (EELQVIQPDK…SPDHVEFKSG (106 aa)). 2 cysteine pairs are disulfide-bonded: Cys54–Cys120 and Cys169–Cys227. 2 Ig-like C1-type domains span residues 147-246 (PSAP…ANLS) and 253-347 (PTLE…HDLK). N-linked (GlcNAc...) asparagine glycans are attached at residues Asn244, Asn291, and Asn318. A disulfide bond links Cys272 and Cys330. Residues 337–354 (QPAVSKSHDLKVSAHPKE) are compositionally biased toward basic and acidic residues. A disordered region spans residues 337–361 (QPAVSKSHDLKVSAHPKEQGSNTAP). Residues 372–392 (LIAFLLGPKVLLVVGVSVIYV) form a helical membrane-spanning segment. Over 393–398 (YWKQKA) the chain is Cytoplasmic.

The protein resides in the membrane. Immunoglobulin-like cell surface receptor involved in the negative regulation of receptor tyrosine kinase-coupled signaling processes. This chain is Signal-regulatory protein beta-1 isoform 3 (SIRPB1), found in Homo sapiens (Human).